The chain runs to 565 residues: Urocanate hydratase (565 aa).

Residues Gly-61–Gly-62, Gln-139, Gly-185–Gly-187, Glu-205, Arg-210, Asn-251–Ala-252, Gln-272–His-276, Tyr-282–Leu-283, and Tyr-331 each bind NAD(+). Residue Cys-419 is part of the active site. The interval Leu-453–Ser-472 is disordered. A compositionally biased stretch (basic and acidic residues) spans Arg-463–Ser-472. Residue Gly-501 participates in NAD(+) binding.

Belongs to the urocanase family. NAD(+) is required as a cofactor.

It is found in the cytoplasm. The enzyme catalyses 4-imidazolone-5-propanoate = trans-urocanate + H2O. It functions in the pathway amino-acid degradation; L-histidine degradation into L-glutamate; N-formimidoyl-L-glutamate from L-histidine: step 2/3. In terms of biological role, catalyzes the conversion of urocanate to 4-imidazolone-5-propionate. The polypeptide is Urocanate hydratase (Pseudomonas syringae).